We begin with the raw amino-acid sequence, 1247 residues long: Structural polyprotein (1247 aa).

Residues 52 to 103 form a disordered region; the sequence is ALRTVPQKPRRTRKTKKQKQVKQEQQSTRNQKKKAPKQKQTQKKKRPGRRER. Composition is skewed to basic residues over residues 59 to 71 and 81 to 100; these read KPRR…KQKQ and NQKK…RPGR. Positions 86-99 are ribosome-binding; sequence APKQKQTQKKKRPG. A disulfide bond links C112 and C127. Residues 112-260 form the Peptidase S3 domain; that stretch reads CIFEVKHEGK…KITPEGSVEW (149 aa). The active-site Charge relay system is the H138. The interval 154-159 is interaction with spike glycoprotein E2; that stretch reads KRSSKY. Residues D160 and S212 each act as charge relay system in the active site. Residues 261-273 are functions as an uncleaved signal peptide for the precursor of protein E3/E2; that stretch reads SLALPVMCLLANT. Intrachain disulfides connect C268/C277, C282/C286, C285/C317, C343/C449, C346/C352, C415/C429, C477/C590, C525/C549, and C527/C544. N272 is a glycosylation site (N-linked (GlcNAc...) asparagine; by host). The Extracellular portion of the chain corresponds to 325-691; it reads NARENFNVYK…YYYELYPTTT (367 aa). The N-linked (GlcNAc...) asparagine; by host glycan is linked to N587. The chain crosses the membrane as a helical span at residues 692–712; the sequence is IAVLAAASIVVASLVSLSLGM. At 713–747 the chain is on the cytoplasmic side; it reads CICARRRCITPYELTPGATIPFLLGVLCCVKTAKA. The interval 715–719 is interaction with the capsid protein; the sequence is CARRR. S-palmitoyl cysteine; by host attachment occurs at residues C720, C740, and C741. A transient transmembrane before p62-6K protein processing region spans residues 720–740; the sequence is CITPYELTPGATIPFLLGVLC. A disulfide bridge connects residues C720 and C741. Residues 748 to 762 are Extracellular-facing; that stretch reads ASYYEAATYLWNEQQ. A helical transmembrane segment spans residues 763–783; sequence PLFWLQLLIPLSAAIVACNCL. Residues 784-787 are Cytoplasmic-facing; sequence KLLP. Residues 788-808 traverse the membrane as a helical segment; the sequence is CCCKTLTFLAVMSIGARTVSA. Residues 809 to 1223 lie on the Extracellular side of the membrane; it reads YEHATVIPNT…AMSWVQKITG (415 aa). Cystine bridges form between C857-C922, C870-C902, C871-C904, and C876-C886. The interval 892-909 is E1 fusion peptide loop; the sequence is VYPFMWGGAYCFCDAENT. N-linked (GlcNAc...) asparagine; by host glycans are attached at residues N949 and N1078. 4 disulfide bridges follow: C1067-C1079, C1109-C1184, C1114-C1188, and C1136-C1178. A helical transmembrane segment spans residues 1224-1244; the sequence is GVGLVVAIAALILIIVLCVSF. The S-palmitoyl cysteine; by host moiety is linked to residue C1241. Residues 1245–1247 lie on the Cytoplasmic side of the membrane; the sequence is SRH.

Homodimer. Homomultimer. Interacts with host karyopherin KPNA4; this interaction allows the nuclear import of the viral capsid protein. Interacts with spike glycoprotein E2. Interacts with host IRAK1; the interaction leads to inhibition of IRAK1-dependent signaling. As to quaternary structure, the precursor of protein E3/E2 and E1 form a heterodimer shortly after synthesis. In terms of assembly, the precursor of protein E3/E2 and E1 form a heterodimer shortly after synthesis. Processing of the precursor of protein E3/E2 into E2 and E3 results in a heterodimer of the spike glycoproteins E2 and E1. Spike at virion surface are constituted of three E2-E1 heterodimers. After target cell attachment and endocytosis, E1 change conformation to form homotrimers. Interacts with 6K protein. Interacts with spike glycoprotein E1. Processing of the precursor of protein E3/E2 into E2 and E3 results in a heterodimer of the spike glycoproteins E2 and E1. Spike at virion surface are constituted of a trimer of E2-E1 heterodimers. Interacts with 6K protein. Interacts with host MXRA8; this interaction mediates virus entry. As to quaternary structure, oligomer. Interacts with spike glycoprotein E1. Interacts with spike glycoprotein E2. Structural polyprotein: Specific enzymatic cleavages in vivo yield mature proteins. Capsid protein is auto-cleaved during polyprotein translation, unmasking a signal peptide at the N-terminus of the precursor of E3/E2. The remaining polyprotein is then targeted to the host endoplasmic reticulum, where host signal peptidase cleaves it into pE2, 6K and E1 proteins. pE2 is further processed to mature E3 and E2 by host furin in trans-Golgi vesicle. In terms of processing, palmitoylated via thioester bonds. These palmitoylations may induce disruption of the C-terminus transmembrane. This would result in the reorientation of E2 C-terminus from lumenal to cytoplasmic side. Post-translationally, N-glycosylated. Palmitoylated via thioester bonds.

The protein localises to the virion. The protein resides in the host cytoplasm. Its subcellular location is the host cell membrane. It is found in the virion membrane. It localises to the host Golgi apparatus. The protein localises to the host trans-Golgi network. The protein resides in the host endoplasmic reticulum. The catalysed reaction is Autocatalytic release of the core protein from the N-terminus of the togavirus structural polyprotein by hydrolysis of a -Trp-|-Ser- bond.. Functionally, possesses a protease activity that results in its autocatalytic cleavage from the nascent structural protein. Following its self-cleavage, the capsid protein transiently associates with ribosomes, and within several minutes the protein binds to viral RNA and rapidly assembles into icosahedric core particles. The resulting nucleocapsid eventually associates with the cytoplasmic domain of the spike glycoprotein E2 at the cell membrane, leading to budding and formation of mature virions. In case of infection, new virions attach to target cells and after clathrin-mediated endocytosis their membrane fuses with the host endosomal membrane. This leads to the release of the nucleocapsid into the cytoplasm, followed by an uncoating event necessary for the genomic RNA to become accessible. The uncoating might be triggered by the interaction of capsid proteins with ribosomes. Binding of ribosomes would release the genomic RNA since the same region is genomic RNA-binding and ribosome-binding. In terms of biological role, provides the signal sequence for the translocation of the precursor of protein E3/E2 to the host endoplasmic reticulum. Mediates pH protection of spike glycoprotein E1 during the transport via the secretory pathway. Plays a role in viral attachment to target host cell, by binding to the cell receptor MXRA8. Synthesized as a p62 precursor which is processed by furin at the cell membrane just before virion budding, giving rise to E2-E1 heterodimer. The p62-E1 heterodimer is stable, whereas E2-E1 is unstable and dissociate at low pH. p62 is processed at the last step, presumably to avoid E1 fusion activation before its final export to cell surface. E2 C-terminus contains a transitory transmembrane that would be disrupted by palmitoylation, resulting in reorientation of the C-terminal tail from lumenal to cytoplasmic side. This step is critical since E2 C-terminus is involved in budding by interacting with capsid proteins. This release of E2 C-terminus in cytoplasm occurs lately in protein export, and precludes premature assembly of particles at the endoplasmic reticulum membrane. Its function is as follows. Acts as a viroporin that participates in virus glycoprotein processing and transport to the plasma membrane, cell permeabilization and budding of viral particles. Disrupts the calcium homeostasis of the cell, probably at the endoplasmic reticulum level. This leads to cytoplasmic calcium elevation. Because of its lipophilic properties, the 6K protein is postulated to influence the selection of lipids that interact with the transmembrane domains of the glycoproteins, which, in turn, affects the deformability of the bilayer required for the extreme curvature that occurs as budding proceeds. Present in low amount in virions, about 3% compared to viral glycoproteins. Functionally, class II viral fusion protein. Fusion activity is inactive as long as E1 is bound to E2 in mature virion. After virus attachment to target cell via host MXRA8 and endocytosis, acidification of the endosome induce dissociation of E1/E2 heterodimer and concomitant trimerization of the E1 subunits. This E1 trimer is fusion active, and promotes release of viral nucleocapsid in cytoplasm after endosome and viral membrane fusion. Efficient fusion requires the presence of cholesterol and sphingolipid in the target membrane. This O'nyong-nyong virus (strain SG650) (ONNV) protein is Structural polyprotein.